Consider the following 359-residue polypeptide: N-acetyl-gamma-glutamyl-phosphate reductase (359 aa).

Cys162 is an active-site residue.

It belongs to the NAGSA dehydrogenase family. Type 1 subfamily.

Its subcellular location is the cytoplasm. The catalysed reaction is N-acetyl-L-glutamate 5-semialdehyde + phosphate + NADP(+) = N-acetyl-L-glutamyl 5-phosphate + NADPH + H(+). It participates in amino-acid biosynthesis; L-arginine biosynthesis; N(2)-acetyl-L-ornithine from L-glutamate: step 3/4. Catalyzes the NADPH-dependent reduction of N-acetyl-5-glutamyl phosphate to yield N-acetyl-L-glutamate 5-semialdehyde. This Prochlorococcus marinus (strain NATL1A) protein is N-acetyl-gamma-glutamyl-phosphate reductase.